Here is a 682-residue protein sequence, read N- to C-terminus: MSRKQLALFEPVLLVQALTDAVKKLSPRAQWRNPVMFVVWAGSVLTTLLTLAMVTGQIAGSALFTGVISLWLWFTVLFANFAEALAEGRSKAQANSLKGVKKTAFARRLRAPRHDAQADNVPAAELRKGDIVLVKAGDIIPCDGEVIEGGASVDESAITGESAPVIRESGGDFASVTGGTRILSDWLVIACSVNPGETFLDRMIAMVEGAQRRKTPNEIALTILLIALTIVFLLATATLWPFSAWGGNAVSVTVLVALLVCLIPTTIGGLLSAIGVAGMSRMLGANVIATSGRAVEAAGDVDVLLLDKTGTITLGNRQASDFIPARGVDERTLADAAQLASLADETPEGRSIVILAKQRFNLRERDVQSLHATFVPFTAQSRMSGINIDNRMIRKGSVDAIRRHVESNGGHFPADVEQNVENVARLGATPLVVVEGARVLGVIALKDIVKGGIKERFAQLRKMGIKTVMITGDNRLTAAAIAAEAGVDDFLAEATPEAKLALIRQYQAEGRLVAMTGDGTNDAPALAQADVAVAMNSGTQAAKEAGNMVDLDSNPTKLIEVVHIGKQMLMTRGSLTTFSIANDVAKYFAIIPAAFAATYPQLNALNVMGLHSPNSAILSAVIFNALIIIFLIPLALKGVSYKPLSASAMLRRNLWIYGLGGLVVPFIGIKVIDVLLTLLGLA.

Transmembrane regions (helical) follow at residues 34 to 54 (PVMF…LAMV), 58 to 78 (IAGS…TVLF), 219 to 239 (IALT…TATL), and 254 to 274 (VLVA…LSAI). The active-site 4-aspartylphosphate intermediate is the Asp-307. ATP is bound by residues Asp-344, Glu-348, 377–384 (FTAQSRMS), and Lys-395. Mg(2+) is bound by residues Asp-518 and Asp-522. The next 3 membrane-spanning stretches (helical) occupy residues 588-608 (FAII…LNVM), 616-636 (AILS…PLAL), and 662-682 (LVVP…LGLA).

This sequence belongs to the cation transport ATPase (P-type) (TC 3.A.3) family. Type IA subfamily. In terms of assembly, the system is composed of three essential subunits: KdpA, KdpB and KdpC.

Its subcellular location is the cell inner membrane. It carries out the reaction K(+)(out) + ATP + H2O = K(+)(in) + ADP + phosphate + H(+). Part of the high-affinity ATP-driven potassium transport (or Kdp) system, which catalyzes the hydrolysis of ATP coupled with the electrogenic transport of potassium into the cytoplasm. This subunit is responsible for energy coupling to the transport system and for the release of the potassium ions to the cytoplasm. The polypeptide is Potassium-transporting ATPase ATP-binding subunit (Salmonella paratyphi B (strain ATCC BAA-1250 / SPB7)).